Consider the following 124-residue polypeptide: Small ribosomal subunit protein uS12 (124 aa).

Aspartate 89 is modified (3-methylthioaspartic acid).

It belongs to the universal ribosomal protein uS12 family. Part of the 30S ribosomal subunit. Contacts proteins S8 and S17. May interact with IF1 in the 30S initiation complex.

In terms of biological role, with S4 and S5 plays an important role in translational accuracy. Functionally, interacts with and stabilizes bases of the 16S rRNA that are involved in tRNA selection in the A site and with the mRNA backbone. Located at the interface of the 30S and 50S subunits, it traverses the body of the 30S subunit contacting proteins on the other side and probably holding the rRNA structure together. The combined cluster of proteins S8, S12 and S17 appears to hold together the shoulder and platform of the 30S subunit. This is Small ribosomal subunit protein uS12 from Photobacterium profundum (strain SS9).